Reading from the N-terminus, the 149-residue chain is Transcriptional repressor NrdR (149 aa).

The segment at 3 to 34 is a zinc-finger region; that stretch reads CPFCSAVDTKVIDSRLVGEGSSVRRRRQCLVC. One can recognise an ATP-cone domain in the interval 49–139; the sequence is PRVVKSNDVR…VYRSFEDIKE (91 aa).

It belongs to the NrdR family. It depends on Zn(2+) as a cofactor.

In terms of biological role, negatively regulates transcription of bacterial ribonucleotide reductase nrd genes and operons by binding to NrdR-boxes. The protein is Transcriptional repressor NrdR of Enterobacter sp. (strain 638).